We begin with the raw amino-acid sequence, 227 residues long: UPF0173 metal-dependent hydrolase YtkL (227 aa).

The protein belongs to the UPF0173 family.

The sequence is that of UPF0173 metal-dependent hydrolase YtkL (ytkL) from Bacillus subtilis (strain 168).